The chain runs to 136 residues: Histone H3.1/H3.2 (136 aa).

Residues Met-1–Lys-43 are disordered. Lys-5 carries the post-translational modification N6,N6,N6-trimethyllysine; alternate. Residue Lys-5 is modified to N6,N6-dimethyllysine; alternate. An N6-methyllysine; alternate mark is found at Lys-5 and Lys-10. Lys-10 is subject to N6-acetyllysine; alternate. Ser-11 bears the Phosphoserine mark. Lys-15 is modified (N6,N6-dimethyllysine; alternate). N6-acetyllysine; alternate is present on residues Lys-15, Lys-19, Lys-24, Lys-28, and Lys-37. An N6-methyllysine; alternate mark is found at Lys-19, Lys-24, Lys-28, and Lys-37. Residues Lys-28 and Lys-37 each carry the N6,N6,N6-trimethyllysine; alternate modification. N6,N6-dimethyllysine; alternate is present on residues Lys-28 and Lys-37. 2 positions are modified to N6-acetyllysine: Lys-57 and Lys-65. Position 80 is an N6,N6,N6-trimethyllysine; alternate (Lys-80). An N6,N6-dimethyllysine; alternate modification is found at Lys-80. Lys-80 is subject to N6-methyllysine; alternate.

It belongs to the histone H3 family. As to quaternary structure, the nucleosome is a histone octamer containing two molecules each of H2A, H2B, H3 and H4 assembled in one H3-H4 heterotetramer and two H2A-H2B heterodimers. The octamer wraps approximately 147 bp of DNA. Phosphorylated to form H3S10ph. H3S10ph promotes subsequent H3K14ac formation and is required for transcriptional activation through TBP recruitment to the promoters. In terms of processing, mono-, di- and trimethylated by the COMPASS complex to form H3K4me1/2/3. H3K4me activates gene expression by regulating transcription elongation and plays a role in telomere length maintenance. H3K4me enrichment correlates with transcription levels, and occurs in a 5' to 3' gradient with H3K4me3 enrichment at the 5'-end of genes, shifting to H3K4me2 and then H3K4me1. Methylated by SET2 to form H3K36me. H3K36me represses gene expression. Methylated by DOT1 to form H3K79me. H3K79me is required for association of SIR proteins with telomeric regions and for telomeric silencing. The COMPASS-mediated formation of H3K4me2/3 and the DOT1-mediated formation of H3K79me require H2BK123ub1. Post-translationally, acetylation of histone H3 leads to transcriptional activation. H3K14ac formation by GCN5 is promoted by H3S10ph. H3K14ac can also be formed by ESA1. H3K56ac formation occurs predominantly in newly synthesized H3 molecules during G1, S and G2/M of the cell cycle and may be involved in DNA repair.

It localises to the nucleus. The protein localises to the chromosome. Its function is as follows. Core component of nucleosome. Nucleosomes wrap and compact DNA into chromatin, limiting DNA accessibility to the cellular machineries which require DNA as a template. Histones thereby play a central role in transcription regulation, DNA repair, DNA replication and chromosomal stability. DNA accessibility is regulated via a complex set of post-translational modifications of histones, also called histone code, and nucleosome remodeling. In Meyerozyma guilliermondii (strain ATCC 6260 / CBS 566 / DSM 6381 / JCM 1539 / NBRC 10279 / NRRL Y-324) (Yeast), this protein is Histone H3.1/H3.2 (HHT1).